The following is a 274-amino-acid chain: 2,3,4,5-tetrahydropyridine-2,6-dicarboxylate N-succinyltransferase (274 aa).

Substrate contacts are provided by arginine 104 and aspartate 141.

The protein belongs to the transferase hexapeptide repeat family. In terms of assembly, homotrimer.

The protein resides in the cytoplasm. It carries out the reaction (S)-2,3,4,5-tetrahydrodipicolinate + succinyl-CoA + H2O = (S)-2-succinylamino-6-oxoheptanedioate + CoA. It participates in amino-acid biosynthesis; L-lysine biosynthesis via DAP pathway; LL-2,6-diaminopimelate from (S)-tetrahydrodipicolinate (succinylase route): step 1/3. The chain is 2,3,4,5-tetrahydropyridine-2,6-dicarboxylate N-succinyltransferase from Sodalis glossinidius (strain morsitans).